We begin with the raw amino-acid sequence, 689 residues long: Glycine--tRNA ligase beta subunit (689 aa).

The protein belongs to the class-II aminoacyl-tRNA synthetase family. Tetramer of two alpha and two beta subunits.

The protein resides in the cytoplasm. It catalyses the reaction tRNA(Gly) + glycine + ATP = glycyl-tRNA(Gly) + AMP + diphosphate. The chain is Glycine--tRNA ligase beta subunit from Escherichia coli O17:K52:H18 (strain UMN026 / ExPEC).